We begin with the raw amino-acid sequence, 488 residues long: UDP-N-acetylmuramoyl-L-alanyl-D-glutamate--2,6-diaminopimelate ligase (488 aa).

UDP-N-acetyl-alpha-D-muramoyl-L-alanyl-D-glutamate contacts are provided by residues leucine 24, serine 26, and 41-43; that span reads HQV. 113–119 provides a ligand contact to ATP; it reads GTNGKTT. UDP-N-acetyl-alpha-D-muramoyl-L-alanyl-D-glutamate-binding positions include asparagine 154, 155-156, serine 182, glutamine 188, and arginine 190; that span reads TT. At lysine 222 the chain carries N6-carboxylysine. Meso-2,6-diaminopimelate contacts are provided by residues arginine 386, 410–413, glycine 461, and glutamate 465; that span reads DNPR. The Meso-diaminopimelate recognition motif motif lies at 410–413; sequence DNPR.

This sequence belongs to the MurCDEF family. MurE subfamily. It depends on Mg(2+) as a cofactor. In terms of processing, carboxylation is probably crucial for Mg(2+) binding and, consequently, for the gamma-phosphate positioning of ATP.

The protein resides in the cytoplasm. The catalysed reaction is UDP-N-acetyl-alpha-D-muramoyl-L-alanyl-D-glutamate + meso-2,6-diaminopimelate + ATP = UDP-N-acetyl-alpha-D-muramoyl-L-alanyl-gamma-D-glutamyl-meso-2,6-diaminopimelate + ADP + phosphate + H(+). It functions in the pathway cell wall biogenesis; peptidoglycan biosynthesis. Its function is as follows. Catalyzes the addition of meso-diaminopimelic acid to the nucleotide precursor UDP-N-acetylmuramoyl-L-alanyl-D-glutamate (UMAG) in the biosynthesis of bacterial cell-wall peptidoglycan. This Haemophilus influenzae (strain ATCC 51907 / DSM 11121 / KW20 / Rd) protein is UDP-N-acetylmuramoyl-L-alanyl-D-glutamate--2,6-diaminopimelate ligase.